The following is a 600-amino-acid chain: Phosphoenolpyruvate carboxykinase (ATP) (600 aa).

302-309 (GLSGTGKT) serves as a coordination point for ATP.

Belongs to the phosphoenolpyruvate carboxykinase (ATP) family.

It carries out the reaction oxaloacetate + ATP = phosphoenolpyruvate + ADP + CO2. It functions in the pathway carbohydrate biosynthesis; gluconeogenesis. This is Phosphoenolpyruvate carboxykinase (ATP) (acuF) from Emericella nidulans (strain FGSC A4 / ATCC 38163 / CBS 112.46 / NRRL 194 / M139) (Aspergillus nidulans).